We begin with the raw amino-acid sequence, 410 residues long: Probable intron-encoded endonuclease bI1 (410 aa).

Residues 1–131 are COB exon 1 encoded; that stretch reads MRLLKTHPIL…VLMMAIAFLG (131 aa). 3 helical membrane passes run 32 to 52, 75 to 95, and 112 to 132; these read FGSLLGVCLIIQILTGVFLAM, GWLIRYLHANTASFFFIFVYL, and LLWSIGVIILVLMMAIAFLGF. The segment at 132-410 is COB intron 1 encoded; that stretch reads FNGQKYMCFY…KKNYIVKVIK (279 aa). One can recognise a GIY-YIG domain in the interval 196 to 286; it reads PFSGIYMIVN…LETLKPEYNI (91 aa).

This sequence to endonucleases of group I introns of fungi and phage. In terms of processing, the mature protein may arise from proteolytic cleavage of an in-frame translation of COB exon 1 plus intron 1, containing the bI1 open reading frame.

It is found in the mitochondrion. The protein localises to the membrane. Functionally, mitochondrial DNA endonuclease involved in intron homing. The polypeptide is Probable intron-encoded endonuclease bI1 (bI1) (Mycosarcoma maydis (Corn smut fungus)).